A 65-amino-acid chain; its full sequence is MLSRDSSQLTSFNNKDSHDIIEVSQTLNALISIIAKHDHDIARHAQAIADIKKCYNLQMLGILQI.

This is an uncharacterized protein from Rickettsia conorii (strain ATCC VR-613 / Malish 7).